The primary structure comprises 577 residues: Dihydroxy-acid dehydratase (577 aa).

Over residues 1 to 10 the composition is skewed to basic and acidic residues; it reads MLKRSFDKSK. The disordered stretch occupies residues 1–22; sequence MLKRSFDKSKLPSRHVTEGPSR. Cysteine 56 serves as a coordination point for [2Fe-2S] cluster. Mg(2+) is bound at residue aspartate 88. [2Fe-2S] cluster is bound at residue cysteine 129. Mg(2+)-binding residues include aspartate 130 and lysine 131. Lysine 131 carries the N6-carboxylysine modification. Cysteine 201 is a binding site for [2Fe-2S] cluster. Position 453 (glutamate 453) interacts with Mg(2+). The active-site Proton acceptor is the serine 479.

It belongs to the IlvD/Edd family. In terms of assembly, homodimer. The cofactor is [2Fe-2S] cluster. Requires Mg(2+) as cofactor.

The catalysed reaction is (2R)-2,3-dihydroxy-3-methylbutanoate = 3-methyl-2-oxobutanoate + H2O. It carries out the reaction (2R,3R)-2,3-dihydroxy-3-methylpentanoate = (S)-3-methyl-2-oxopentanoate + H2O. Its pathway is amino-acid biosynthesis; L-isoleucine biosynthesis; L-isoleucine from 2-oxobutanoate: step 3/4. The protein operates within amino-acid biosynthesis; L-valine biosynthesis; L-valine from pyruvate: step 3/4. Its function is as follows. Functions in the biosynthesis of branched-chain amino acids. Catalyzes the dehydration of (2R,3R)-2,3-dihydroxy-3-methylpentanoate (2,3-dihydroxy-3-methylvalerate) into 2-oxo-3-methylpentanoate (2-oxo-3-methylvalerate) and of (2R)-2,3-dihydroxy-3-methylbutanoate (2,3-dihydroxyisovalerate) into 2-oxo-3-methylbutanoate (2-oxoisovalerate), the penultimate precursor to L-isoleucine and L-valine, respectively. In Dinoroseobacter shibae (strain DSM 16493 / NCIMB 14021 / DFL 12), this protein is Dihydroxy-acid dehydratase.